The sequence spans 250 residues: Ribosomal RNA small subunit methyltransferase J (250 aa).

Residues 101–102 (RD), 117–118 (ER), 153–154 (SS), and D171 contribute to the S-adenosyl-L-methionine site.

The protein belongs to the methyltransferase superfamily. RsmJ family.

The protein localises to the cytoplasm. The enzyme catalyses guanosine(1516) in 16S rRNA + S-adenosyl-L-methionine = N(2)-methylguanosine(1516) in 16S rRNA + S-adenosyl-L-homocysteine + H(+). Functionally, specifically methylates the guanosine in position 1516 of 16S rRNA. In Cronobacter sakazakii (strain ATCC BAA-894) (Enterobacter sakazakii), this protein is Ribosomal RNA small subunit methyltransferase J.